The following is an 850-amino-acid chain: DEAD-box ATP-dependent RNA helicase 26 (850 aa).

Disordered regions lie at residues 60–82 (TRPERSQPEFARRSGAGGEIRAS) and 106–350 (GKFT…ENDE). The span at 61–71 (RPERSQPEFAR) shows a compositional bias: basic and acidic residues. Threonine 109 is subject to Phosphothreonine. Residue serine 110 is modified to Phosphoserine. Composition is skewed to basic and acidic residues over residues 118 to 140 (EVVRRNVDRDTSRGPRRGREGQS) and 284 to 299 (GRNDRNVESGFRREPG). Acidic residues-rich tracts occupy residues 315–325 (LEEEDSSDDDE) and 336–350 (LPSEDSSDEDDENDE). A Q motif motif is present at residues 382-410 (TRFDQFPLSPLSLKAIKDAGFETMTVVQE). The Helicase ATP-binding domain maps to 413–596 (LPIILQGKDV…HVALKRDHEF (184 aa)). 426 to 433 (AKTGTGKT) contacts ATP. The DEAD box motif lies at 544-547 (DEAD). Positions 630–777 (LLKEHIADNV…IDPEAVKRVQ (148 aa)) constitute a Helicase C-terminal domain.

Belongs to the DEAD box helicase family.

The catalysed reaction is ATP + H2O = ADP + phosphate + H(+). The sequence is that of DEAD-box ATP-dependent RNA helicase 26 (RH26) from Arabidopsis thaliana (Mouse-ear cress).